Reading from the N-terminus, the 38-residue chain is Large ribosomal subunit protein bL36 (38 aa).

The protein belongs to the bacterial ribosomal protein bL36 family.

The protein is Large ribosomal subunit protein bL36 of Limosilactobacillus fermentum (strain NBRC 3956 / LMG 18251) (Lactobacillus fermentum).